The sequence spans 900 residues: Serine-rich coiled-coil domain-containing protein 1 (900 aa).

2 disordered regions span residues Met-1–Met-100 and Lys-156–Arg-178. The segment covering Leu-29–Thr-56 has biased composition (low complexity). Positions Glu-81–Met-100 are enriched in polar residues. The stretch at Met-673–Ala-707 forms a coiled coil.

Belongs to the CCSER family.

The sequence is that of Serine-rich coiled-coil domain-containing protein 1 (CCSER1) from Homo sapiens (Human).